The chain runs to 312 residues: Apolipoprotein E (312 aa).

The signal sequence occupies residues 1-18; sequence MKALWAVLLVTLLAGCLA. A run of 8 repeats spans residues 72-93, 94-115, 116-137, 138-159, 160-181, 182-203, 204-225, and 226-247. Residues 72–247 form an 8 X 22 AA approximate tandem repeats region; the sequence is VLMEDTMTEV…RLEEVREHME (176 aa). Methionine 135 is subject to Methionine sulfoxide. Phosphoserine is present on serine 139. Positions 150-160 are LDL and other lipoprotein receptors binding; the sequence is HLRKMRKRLMR. Residue 154–157 coordinates heparin; that stretch reads MRKR. The tract at residues 202–282 is lipid-binding and lipoprotein association; sequence TANLGAGAAQ…GWFEPIVEDM (81 aa). Position 221-228 (221-228) interacts with heparin; sequence GDRIRGRL. Residues 258–312 form a homooligomerization region; that stretch reads QQIRLQAEIFQARLKGWFEPIVEDMHRQWANLMEKIQASVATNPIISTPMPQENQ. Residues 270-282 are specificity for association with VLDL; sequence RLKGWFEPIVEDM.

This sequence belongs to the apolipoprotein A1/A4/E family. As to quaternary structure, homotetramer. May interact with ABCA1; functionally associated with ABCA1 in the biogenesis of HDLs. May interact with APP/A4 amyloid-beta peptide; the interaction is extremely stable in vitro but its physiological significance is unclear. May interact with MAPT. May interact with MAP2. In the cerebrospinal fluid, interacts with secreted SORL1. Interacts with PMEL; this allows the loading of PMEL luminal fragment on ILVs to induce fibril nucleation. APOE exists as multiple glycosylated and sialylated glycoforms within cells and in plasma. The extent of glycosylation and sialylation are tissue and context specific. In terms of processing, glycated in plasma VLDL. Post-translationally, phosphorylated by FAM20C in the extracellular medium.

It localises to the secreted. The protein localises to the extracellular space. Its subcellular location is the extracellular matrix. The protein resides in the extracellular vesicle. It is found in the endosome. It localises to the multivesicular body. APOE is an apolipoprotein, a protein associating with lipid particles, that mainly functions in lipoprotein-mediated lipid transport between organs via the plasma and interstitial fluids. APOE is a core component of plasma lipoproteins and is involved in their production, conversion and clearance. Apolipoproteins are amphipathic molecules that interact both with lipids of the lipoprotein particle core and the aqueous environment of the plasma. As such, APOE associates with chylomicrons, chylomicron remnants, very low density lipoproteins (VLDL) and intermediate density lipoproteins (IDL) but shows a preferential binding to high-density lipoproteins (HDL). It also binds a wide range of cellular receptors including the LDL receptor/LDLR, the LDL receptor-related proteins LRP1, LRP2 and LRP8 and the very low-density lipoprotein receptor/VLDLR that mediate the cellular uptake of the APOE-containing lipoprotein particles. Finally, APOE also has a heparin-binding activity and binds heparan-sulfate proteoglycans on the surface of cells, a property that supports the capture and the receptor-mediated uptake of APOE-containing lipoproteins by cells. A main function of APOE is to mediate lipoprotein clearance through the uptake of chylomicrons, VLDLs, and HDLs by hepatocytes. APOE is also involved in the biosynthesis by the liver of VLDLs as well as their uptake by peripheral tissues ensuring the delivery of triglycerides and energy storage in muscle, heart and adipose tissues. By participating in the lipoprotein-mediated distribution of lipids among tissues, APOE plays a critical role in plasma and tissues lipid homeostasis. APOE is also involved in two steps of reverse cholesterol transport, the HDLs-mediated transport of cholesterol from peripheral tissues to the liver, and thereby plays an important role in cholesterol homeostasis. First, it is functionally associated with ABCA1 in the biogenesis of HDLs in tissues. Second, it is enriched in circulating HDLs and mediates their uptake by hepatocytes. APOE also plays an important role in lipid transport in the central nervous system, regulating neuron survival and sprouting. The chain is Apolipoprotein E (Apoe) from Mus pahari (Gairdner's shrew-mouse).